Here is a 348-residue protein sequence, read N- to C-terminus: Phospho-2-dehydro-3-deoxyheptonate aldolase, Trp-sensitive (348 aa).

Belongs to the class-I DAHP synthase family.

It catalyses the reaction D-erythrose 4-phosphate + phosphoenolpyruvate + H2O = 7-phospho-2-dehydro-3-deoxy-D-arabino-heptonate + phosphate. It functions in the pathway metabolic intermediate biosynthesis; chorismate biosynthesis; chorismate from D-erythrose 4-phosphate and phosphoenolpyruvate: step 1/7. Its function is as follows. Stereospecific condensation of phosphoenolpyruvate (PEP) and D-erythrose-4-phosphate (E4P) giving rise to 3-deoxy-D-arabino-heptulosonate-7-phosphate (DAHP). This chain is Phospho-2-dehydro-3-deoxyheptonate aldolase, Trp-sensitive (aroH), found in Salmonella typhimurium (strain LT2 / SGSC1412 / ATCC 700720).